The sequence spans 272 residues: Shikimate dehydrogenase (NADP(+)) (272 aa).

Shikimate is bound by residues serine 19–serine 21 and threonine 66. The active-site Proton acceptor is the lysine 70. An NADP(+)-binding site is contributed by glutamate 82. Asparagine 91 and aspartate 106 together coordinate shikimate. NADP(+) is bound by residues glycine 129–alanine 133, asparagine 151–lysine 156, and isoleucine 214. Tyrosine 216 provides a ligand contact to shikimate. Glycine 237 contributes to the NADP(+) binding site.

This sequence belongs to the shikimate dehydrogenase family. Homodimer.

It catalyses the reaction shikimate + NADP(+) = 3-dehydroshikimate + NADPH + H(+). The protein operates within metabolic intermediate biosynthesis; chorismate biosynthesis; chorismate from D-erythrose 4-phosphate and phosphoenolpyruvate: step 4/7. Its function is as follows. Involved in the biosynthesis of the chorismate, which leads to the biosynthesis of aromatic amino acids. Catalyzes the reversible NADPH linked reduction of 3-dehydroshikimate (DHSA) to yield shikimate (SA). This is Shikimate dehydrogenase (NADP(+)) from Thermococcus kodakarensis (strain ATCC BAA-918 / JCM 12380 / KOD1) (Pyrococcus kodakaraensis (strain KOD1)).